Reading from the N-terminus, the 367-residue chain is Anthranilate phosphoribosyltransferase (367 aa).

A compositionally biased stretch (low complexity) spans 1–21; the sequence is MALSSESSAASAARRPSGGPA. Positions 1–24 are disordered; that stretch reads MALSSESSAASAARRPSGGPATSW. Residues G104, 107–108, T112, 114–117, 132–140, and G144 contribute to the 5-phospho-alpha-D-ribose 1-diphosphate site; these read GD, NLST, and KHGNRAASS. Position 104 (G104) interacts with anthranilate. Mg(2+) is bound at residue S116. N135 is an anthranilate binding site. Position 190 (R190) interacts with anthranilate. Positions 248 and 249 each coordinate Mg(2+).

This sequence belongs to the anthranilate phosphoribosyltransferase family. In terms of assembly, homodimer. Requires Mg(2+) as cofactor.

The enzyme catalyses N-(5-phospho-beta-D-ribosyl)anthranilate + diphosphate = 5-phospho-alpha-D-ribose 1-diphosphate + anthranilate. Its pathway is amino-acid biosynthesis; L-tryptophan biosynthesis; L-tryptophan from chorismate: step 2/5. Catalyzes the transfer of the phosphoribosyl group of 5-phosphorylribose-1-pyrophosphate (PRPP) to anthranilate to yield N-(5'-phosphoribosyl)-anthranilate (PRA). The sequence is that of Anthranilate phosphoribosyltransferase from Mycolicibacterium paratuberculosis (strain ATCC BAA-968 / K-10) (Mycobacterium paratuberculosis).